The sequence spans 176 residues: Ribosome maturation factor RimM (176 aa).

Residues 97 to 176 enclose the PRC barrel domain; the sequence is DNDFYHRDLI…QIVVDWDPDF (80 aa).

Belongs to the RimM family. In terms of assembly, binds ribosomal protein uS19.

The protein localises to the cytoplasm. Functionally, an accessory protein needed during the final step in the assembly of 30S ribosomal subunit, possibly for assembly of the head region. Essential for efficient processing of 16S rRNA. May be needed both before and after RbfA during the maturation of 16S rRNA. It has affinity for free ribosomal 30S subunits but not for 70S ribosomes. The chain is Ribosome maturation factor RimM from Shewanella denitrificans (strain OS217 / ATCC BAA-1090 / DSM 15013).